Here is a 2371-residue protein sequence, read N- to C-terminus: Highly reducing polyketide synthase ntnH (2371 aa).

One can recognise a Ketosynthase family 3 (KS3) domain in the interval 10–429 (PSPIAIVGIG…GANAHVILEG (420 aa)). Catalysis depends on for beta-ketoacyl synthase activity residues cysteine 180, histidine 316, and histidine 352. The interval 528-796 (FIFTGQGAQW…NSCLSRGADA (269 aa)) is malonyl-CoA:ACP transacylase (MAT) domain. The N-terminal hotdog fold stretch occupies residues 858 to 986 (HELLGARVIG…GKVHPGNAST (129 aa)). Residues 858-1142 (HELLGARVIG…GIRFRILENN (285 aa)) are dehydratase (DH) domain. Residues 858-1145 (HELLGARVIG…FRILENNRSK (288 aa)) form the PKS/mFAS DH domain. Catalysis depends on histidine 890, which acts as the Proton acceptor; for dehydratase activity. A C-terminal hotdog fold region spans residues 1001–1145 (VRGVISAKWY…FRILENNRSK (145 aa)). Aspartate 1059 acts as the Proton donor; for dehydratase activity in catalysis. The interval 1309–1456 (FFQLLGHNKK…FENVTAIMDQ (148 aa)) is methyltransferase (CMet) domain. The segment at 1669–1968 (GLLSSLQWQG…GHRPIGAICI (300 aa)) is enoyl reductase (ER) (ER) domain. The tract at residues 1993–2167 (SYVLIGGLGG…ASVIDLGVME (175 aa)) is ketoreductase (KR) domain. The region spanning 2280–2362 (EDETAVAEFL…DLGKLARSRI (83 aa)) is the Carrier domain. At serine 2322 the chain carries O-(pantetheine 4'-phosphoryl)serine.

The protein operates within secondary metabolite biosynthesis; terpenoid biosynthesis. Functionally, highly reducing polyketide synthase; part of the gene cluster that mediates the biosynthesis of the meroterpenoids nectripenoids A and B, as well as cochliquninone D and isocochliquninone E. The pathway probably begins with the HR-PKS ntnH that catalyzes two chain-extension steps to form a reduced triketide, which then primes the SAT domain in the NR-PKS ntnG to initiate three more cycles of extension to give a linear hexaketide corresponding to the polyketide part of nectripenoids. The FAD-dependent monooxygenase ntnJ then performs an oxidative decarboxylation at C11 of the ntnH/ntnG product, via an electrophilic aromatic hydroxylation with concomitant ipso-decarboxylation. The membrane-bound polyprenyl transferase ntnF then introduces a farnesyl group before the FAD-dependent monooxygenase ntnK functions as the first epoxidase on terminal C12'-C13' olefin, followed by a second epoxidation on C7'-C8' catalyzed by ntnA. The terpene cyclase/mutase ntnI then initiates the sequential tricyclic ring formation through protonation of the terminal epoxide and catalyzes the regioselective and stereoselective 6/6/6-tricyclic ring formation. The cytochrome P450 monooxygenase ntnM may then hydroxylate C1'. The polypeptide is Highly reducing polyketide synthase ntnH (Nectria sp).